The following is a 611-amino-acid chain: Probable potassium transport system protein Kup 1 (611 aa).

The next 12 membrane-spanning stretches (helical) occupy residues 6-26, 44-64, 90-110, 129-149, 158-178, 193-213, 237-257, 280-300, 328-348, 354-374, 385-405, and 410-430; these read LMVG…LYTM, MLSL…VAVV, LGVI…GAIT, ISPY…ALQA, LFGP…LFGI, GLSY…AVFL, WYGL…AVVV, LVAL…SGAF, IYIG…TLGF, LAAA…ILMF, LAAS…FVSA, and VLEG…LMMT.

Belongs to the HAK/KUP transporter (TC 2.A.72) family.

It localises to the cell inner membrane. It carries out the reaction K(+)(in) + H(+)(in) = K(+)(out) + H(+)(out). Transport of potassium into the cell. Likely operates as a K(+):H(+) symporter. The protein is Probable potassium transport system protein Kup 1 of Bradyrhizobium sp. (strain BTAi1 / ATCC BAA-1182).